Consider the following 936-residue polypeptide: Isoleucine--tRNA ligase (936 aa).

The short motif at 58 to 68 is the 'HIGH' region element; sequence PYANGNIHIGH. Glu-560 is a binding site for L-isoleucyl-5'-AMP. Positions 601 to 605 match the 'KMSKS' region motif; that stretch reads KMSKS. Residue Lys-604 coordinates ATP. Cys-899, Cys-902, Cys-919, and Cys-922 together coordinate Zn(2+).

Belongs to the class-I aminoacyl-tRNA synthetase family. IleS type 1 subfamily. In terms of assembly, monomer. Zn(2+) serves as cofactor.

Its subcellular location is the cytoplasm. The enzyme catalyses tRNA(Ile) + L-isoleucine + ATP = L-isoleucyl-tRNA(Ile) + AMP + diphosphate. Catalyzes the attachment of isoleucine to tRNA(Ile). As IleRS can inadvertently accommodate and process structurally similar amino acids such as valine, to avoid such errors it has two additional distinct tRNA(Ile)-dependent editing activities. One activity is designated as 'pretransfer' editing and involves the hydrolysis of activated Val-AMP. The other activity is designated 'posttransfer' editing and involves deacylation of mischarged Val-tRNA(Ile). In Proteus mirabilis (strain HI4320), this protein is Isoleucine--tRNA ligase.